Consider the following 729-residue polypeptide: Methionine--tRNA ligase (729 aa).

A 'HIGH' region motif is present at residues 12-22 (PYVNNIPHLGN). 4 residues coordinate Zn(2+): Cys143, Cys146, Cys155, and Cys158. The 'KMSKS' region motif lies at 330 to 334 (KFSKS). Lys333 contributes to the ATP binding site. In terms of domain architecture, tRNA-binding spans 565 to 670 (FSEQVCLKVV…DNPIPGERII (106 aa)).

Belongs to the class-I aminoacyl-tRNA synthetase family. MetG type 1 subfamily. Homodimer. The cofactor is Zn(2+).

The protein localises to the cytoplasm. It carries out the reaction tRNA(Met) + L-methionine + ATP = L-methionyl-tRNA(Met) + AMP + diphosphate. Functionally, is required not only for elongation of protein synthesis but also for the initiation of all mRNA translation through initiator tRNA(fMet) aminoacylation. This Borrelia hermsii (strain HS1 / DAH) protein is Methionine--tRNA ligase.